The primary structure comprises 739 residues: Pre-mRNA-splicing factor ATP-dependent RNA helicase ddx-15 (739 aa).

The segment covering 1–19 has biased composition (basic and acidic residues); the sequence is MSSRHRLDLDGSGRGDRRR. Residues 1–49 form a disordered region; it reads MSSRHRLDLDGSGRGDRRRSPNRRSRSRSRSPHRRSSPDRKRQIGAVGN. Residues 20–35 show a composition bias toward basic residues; sequence SPNRRSRSRSRSPHRR. Positions 86 to 257 constitute a Helicase ATP-binding domain; it reads MELLRNNQCI…FEDCPLLSVP (172 aa). ATP is bound at residue 99 to 106; it reads GETGSGKT. Positions 204-207 match the DEAH box motif; the sequence is DEAH. Residues 282–462 form the Helicase C-terminal domain; it reads TVIQIHMVEE…SVVLQLKKLG (181 aa).

This sequence belongs to the DEAD box helicase family. DEAH subfamily. DDX15/PRP43 sub-subfamily.

The protein resides in the nucleus. The enzyme catalyses ATP + H2O = ADP + phosphate + H(+). Pre-mRNA processing factor involved in disassembly of spliceosomes after the release of mature mRNA. This chain is Pre-mRNA-splicing factor ATP-dependent RNA helicase ddx-15, found in Caenorhabditis elegans.